Reading from the N-terminus, the 130-residue chain is Small ribosomal subunit protein uS8B (130 aa).

The protein belongs to the universal ribosomal protein uS8 family.

The polypeptide is Small ribosomal subunit protein uS8B (RpS15Ab) (Drosophila melanogaster (Fruit fly)).